The primary structure comprises 557 residues: Dihydroxy-acid dehydratase (557 aa).

Residue Cys-47 participates in [2Fe-2S] cluster binding. Asp-79 lines the Mg(2+) pocket. Residue Cys-120 coordinates [2Fe-2S] cluster. Residues Asp-121 and Lys-122 each contribute to the Mg(2+) site. Lys-122 is modified (N6-carboxylysine). Residue Cys-192 coordinates [2Fe-2S] cluster. Glu-444 is a Mg(2+) binding site. Ser-470 serves as the catalytic Proton acceptor.

Belongs to the IlvD/Edd family. Homodimer. The cofactor is [2Fe-2S] cluster. Requires Mg(2+) as cofactor.

The enzyme catalyses (2R)-2,3-dihydroxy-3-methylbutanoate = 3-methyl-2-oxobutanoate + H2O. It carries out the reaction (2R,3R)-2,3-dihydroxy-3-methylpentanoate = (S)-3-methyl-2-oxopentanoate + H2O. Its pathway is amino-acid biosynthesis; L-isoleucine biosynthesis; L-isoleucine from 2-oxobutanoate: step 3/4. The protein operates within amino-acid biosynthesis; L-valine biosynthesis; L-valine from pyruvate: step 3/4. Functionally, functions in the biosynthesis of branched-chain amino acids. Catalyzes the dehydration of (2R,3R)-2,3-dihydroxy-3-methylpentanoate (2,3-dihydroxy-3-methylvalerate) into 2-oxo-3-methylpentanoate (2-oxo-3-methylvalerate) and of (2R)-2,3-dihydroxy-3-methylbutanoate (2,3-dihydroxyisovalerate) into 2-oxo-3-methylbutanoate (2-oxoisovalerate), the penultimate precursor to L-isoleucine and L-valine, respectively. This Synechococcus sp. (strain CC9902) protein is Dihydroxy-acid dehydratase.